The following is a 943-amino-acid chain: 2-oxoglutarate dehydrogenase E1 component (943 aa).

This sequence belongs to the alpha-ketoglutarate dehydrogenase family. Homodimer. Part of the 2-oxoglutarate dehydrogenase (OGDH) complex composed of E1 (2-oxoglutarate dehydrogenase), E2 (dihydrolipoamide succinyltransferase) and E3 (dihydrolipoamide dehydrogenase); the complex contains multiple copies of the three enzymatic components (E1, E2 and E3). Thiamine diphosphate serves as cofactor.

It catalyses the reaction N(6)-[(R)-lipoyl]-L-lysyl-[protein] + 2-oxoglutarate + H(+) = N(6)-[(R)-S(8)-succinyldihydrolipoyl]-L-lysyl-[protein] + CO2. In terms of biological role, E1 component of the 2-oxoglutarate dehydrogenase (OGDH) complex which catalyzes the decarboxylation of 2-oxoglutarate, the first step in the conversion of 2-oxoglutarate to succinyl-CoA and CO(2). The protein is 2-oxoglutarate dehydrogenase E1 component of Shouchella clausii (strain KSM-K16) (Alkalihalobacillus clausii).